Here is a 334-residue protein sequence, read N- to C-terminus: G2/mitotic-specific cyclin-1 (334 aa).

Belongs to the cyclin family. Cyclin AB subfamily.

Its function is as follows. Essential for the control of the cell cycle at the G2/M (mitosis) transition. In Trypanosoma brucei brucei, this protein is G2/mitotic-specific cyclin-1 (CYC1).